The following is a 148-amino-acid chain: Large ribosomal subunit protein uL13 (148 aa).

The disordered stretch occupies residues 128 to 148 (PEHPHQAQNPQPFEINAKVEK).

Belongs to the universal ribosomal protein uL13 family. In terms of assembly, part of the 50S ribosomal subunit.

Functionally, this protein is one of the early assembly proteins of the 50S ribosomal subunit, although it is not seen to bind rRNA by itself. It is important during the early stages of 50S assembly. The polypeptide is Large ribosomal subunit protein uL13 (Saccharopolyspora erythraea (strain ATCC 11635 / DSM 40517 / JCM 4748 / NBRC 13426 / NCIMB 8594 / NRRL 2338)).